Reading from the N-terminus, the 362-residue chain is MAGTYKIAVLPGDGIGPEVMLQAHKVLDAVEEKFGFTLERSEHDVGGIAIDNHGCPLPESTMKGCEESDAILFGSVGGPKWEHLAPNDQPERGALLPLRKHFQLFCNLRPAQIHSGLEGFSPLRADISERGFDIVVVRELTGGIYFGQPKGREGEGPQEKAYDTEIYHRYEIERIARIAFESAMLREKNVYSIDKANVLQSSILWREVVEEVAKDYPEVTLNHMYIDNATMQLIKDPSQFDVMLCSNIFGDIISDECAMITGSMGMLPSASLNQEKFGMYEPAGGSAPDIAGKNIANPVAQILSAALMLRYSLDEEKAARAIEQAVSQALEAGELTADLAGKGAALSTSEMGDKIAAYIRQA.

78 to 91 (GPKWEHLAPNDQPE) lines the NAD(+) pocket. The substrate site is built by Arg-99, Arg-109, Arg-138, and Asp-227. Mg(2+)-binding residues include Asp-227, Asp-251, and Asp-255. Residue 285–297 (GSAPDIAGKNIAN) coordinates NAD(+).

Belongs to the isocitrate and isopropylmalate dehydrogenases family. LeuB type 1 subfamily. Homodimer. Mg(2+) serves as cofactor. The cofactor is Mn(2+).

The protein resides in the cytoplasm. The enzyme catalyses (2R,3S)-3-isopropylmalate + NAD(+) = 4-methyl-2-oxopentanoate + CO2 + NADH. It participates in amino-acid biosynthesis; L-leucine biosynthesis; L-leucine from 3-methyl-2-oxobutanoate: step 3/4. In terms of biological role, catalyzes the oxidation of 3-carboxy-2-hydroxy-4-methylpentanoate (3-isopropylmalate) to 3-carboxy-4-methyl-2-oxopentanoate. The product decarboxylates to 4-methyl-2 oxopentanoate. In Photobacterium profundum (strain SS9), this protein is 3-isopropylmalate dehydrogenase.